The sequence spans 223 residues: Type III pantothenate kinase (223 aa).

ATP is bound at residue 17–24 (DIGNTRIH). Substrate-binding positions include tyrosine 81 and 85–88 (GIDR). Aspartate 87 serves as the catalytic Proton acceptor. Aspartate 102 contributes to the K(+) binding site. An ATP-binding site is contributed by serine 105. Threonine 157 contacts substrate.

The protein belongs to the type III pantothenate kinase family. Homodimer. NH4(+) is required as a cofactor. The cofactor is K(+).

It localises to the cytoplasm. The catalysed reaction is (R)-pantothenate + ATP = (R)-4'-phosphopantothenate + ADP + H(+). It functions in the pathway cofactor biosynthesis; coenzyme A biosynthesis; CoA from (R)-pantothenate: step 1/5. Its activity is regulated as follows. Not regulated by feedback inhibition by CoA and its thioesters as described for many other pantothenate kinases. Not inhibited by N-pentylpantothenamide (N5-Pan), and this compound cannot act as a substrate either. Catalyzes the phosphorylation of pantothenate (Pan), the first step in CoA biosynthesis. Can also utilize CTP or GTP instead of ATP as a phosphoryl donor, albeit to a lesser extent. This chain is Type III pantothenate kinase (coaX), found in Helicobacter pylori (strain ATCC 700392 / 26695) (Campylobacter pylori).